A 384-amino-acid chain; its full sequence is Probable L-aspartate decarboxylase (384 aa).

At lysine 233 the chain carries N6-(pyridoxal phosphate)lysine.

Belongs to the group II decarboxylase family. MfnA subfamily. Requires pyridoxal 5'-phosphate as cofactor.

It catalyses the reaction L-aspartate + H(+) = beta-alanine + CO2. It functions in the pathway cofactor biosynthesis; coenzyme A biosynthesis. Its function is as follows. Catalyzes the decarboxylation of L-aspartate to produce beta-alanine. This is Probable L-aspartate decarboxylase from Pyrococcus abyssi (strain GE5 / Orsay).